A 226-amino-acid polypeptide reads, in one-letter code: SURF1-like protein (226 aa).

A run of 2 helical transmembrane segments spans residues 3-23 (TNLVVLITFTILISLGFWQLS) and 199-219 (LEYALTWFGLAISLIVIYVIY).

This sequence belongs to the SURF1 family.

The protein resides in the cell membrane. This chain is SURF1-like protein, found in Rickettsia felis (strain ATCC VR-1525 / URRWXCal2) (Rickettsia azadi).